Consider the following 45-residue polypeptide: Pseudo-hevein (45 aa).

The Chitin-binding type-1 domain occupies 1 to 43 (EQCGRQAGGKLCPNNLCCSQYGWCGSSDDYCSPSKNCQSNCKG). Disulfide bonds link Cys3–Cys18, Cys12–Cys24, Cys17–Cys31, and Cys37–Cys41.

In terms of biological role, N-acetyl-D-glucosamine / N-acetyl-D-neuraminic acid binding lectin. Can inhibit fungal growth. The polypeptide is Pseudo-hevein (Hevea brasiliensis (Para rubber tree)).